Here is a 104-residue protein sequence, read N- to C-terminus: UPF0045 protein YqgV (104 aa).

It belongs to the UPF0045 family.

The protein is UPF0045 protein YqgV (yqgV) of Bacillus subtilis (strain 168).